A 238-amino-acid chain; its full sequence is MTPHINAPAGAFADVVLMPGDPLRAKYIAETFLENAQEVTNIRNMLGYTGTYKGRKISVMGHGMGIPSCSIYAKELITEYGVKKIIRVGSCGAVNMDVKIRDVIIGLGACTDSKVNRIRFKDNDFAAIADFGMAQAAVQAAKNKGIDVKVGNLFSADLFYTPDPEMFDVMEKYGILGVEMEAAGIYGVAAEFKAKALTICTVSDHIRTHEQTSAEERQLTFNEMIEIALESVLLGDSL.

Position 4 (H4) interacts with a purine D-ribonucleoside. Phosphate is bound by residues G20, R24, R43, and 87–90 (RVGS). A purine D-ribonucleoside-binding positions include 179-181 (EME) and 203-204 (SD). Residue D204 is the Proton donor of the active site.

The protein belongs to the PNP/UDP phosphorylase family. As to quaternary structure, homohexamer; trimer of homodimers.

The enzyme catalyses a purine D-ribonucleoside + phosphate = a purine nucleobase + alpha-D-ribose 1-phosphate. It carries out the reaction a purine 2'-deoxy-D-ribonucleoside + phosphate = a purine nucleobase + 2-deoxy-alpha-D-ribose 1-phosphate. Catalyzes the reversible phosphorolytic breakdown of the N-glycosidic bond in the beta-(deoxy)ribonucleoside molecules, with the formation of the corresponding free purine bases and pentose-1-phosphate. This Histophilus somni (strain 129Pt) (Haemophilus somnus) protein is Purine nucleoside phosphorylase DeoD-type.